The sequence spans 623 residues: Serine/threonine-protein kinase MAK (623 aa).

In terms of domain architecture, Protein kinase spans 4-284 (YTTMRQLGDG…ASQALKHPYF (281 aa)). Residues 10–18 (LGDGTYGSV) and K33 contribute to the ATP site. Catalysis depends on D125, which acts as the Proton acceptor. T157 carries the phosphothreonine; by autocatalysis modification. A Phosphotyrosine; by autocatalysis modification is found at Y159. 2 disordered regions span residues 328–396 (IDQV…RRRW) and 416–469 (GASH…SDSE). Low complexity predominate over residues 356-369 (QQPPKQQSQEKPPQ). Residues 446–455 (SGSNHSTGEN) show a composition bias toward polar residues.

Belongs to the protein kinase superfamily. CMGC Ser/Thr protein kinase family. CDC2/CDKX subfamily. As to quaternary structure, interacts with RP1. Interacts with AR and CDK20. Found in a complex containing MAK, AR and NCOA3. Interacts with FZR1 (via WD repeats). Mg(2+) serves as cofactor. Post-translationally, autophosphorylated. Phosphorylated on serine and threonine residues. Expressed in prostate cancer cell lines at generally higher levels than in normal prostate epithelial cell lines. Isoform 1 is expressed in kidney, testis, lung, trachea, and retina. Isoform 2 is retina-specific where it is expressed in rod and cone photoreceptors.

The protein resides in the nucleus. The protein localises to the cytoplasm. It is found in the cytoskeleton. Its subcellular location is the microtubule organizing center. It localises to the centrosome. The protein resides in the spindle. The protein localises to the midbody. It is found in the cell projection. Its subcellular location is the cilium. It localises to the photoreceptor outer segment. The protein resides in the photoreceptor inner segment. It catalyses the reaction L-seryl-[protein] + ATP = O-phospho-L-seryl-[protein] + ADP + H(+). The enzyme catalyses L-threonyl-[protein] + ATP = O-phospho-L-threonyl-[protein] + ADP + H(+). Its function is as follows. Essential for the regulation of ciliary length and required for the long-term survival of photoreceptors. Phosphorylates FZR1 in a cell cycle-dependent manner. Plays a role in the transcriptional coactivation of AR. Could play an important function in spermatogenesis. May play a role in chromosomal stability in prostate cancer cells. The sequence is that of Serine/threonine-protein kinase MAK (MAK) from Homo sapiens (Human).